A 364-amino-acid chain; its full sequence is Oxidized low-density lipoprotein receptor 1 (364 aa).

The interval 1 to 21 (MAFDDKMKPVNGQPDQKSCGK) is disordered. Residues 1–31 (MAFDDKMKPVNGQPDQKSCGKKPKGLHLLSS) are Cytoplasmic-facing. A helical; Signal-anchor for type II membrane protein membrane pass occupies residues 32 to 54 (TWWCPAAVTLAILCLVLSVTLIV). Residues C35 and C45 are each lipidated (S-palmitoyl cysteine). The neck stretch occupies residues 55 to 242 (QQTQLLQVSD…GPCPQDWIWH (188 aa)). At 55 to 364 (QQTQLLQVSD…QKKANLLLTQ (310 aa)) the chain is on the extracellular side. N72, N92, and N138 each carry an N-linked (GlcNAc...) asparagine glycan. A coiled-coil region spans residues 83–233 (QMSAQKKAEN…ALQRAANSSG (151 aa)). 3 consecutive repeat copies span residues 96–141 (ESKR…NASE), 142–187 (ESKW…KYSE), and 188–233 (ESQR…NSSG). 3 disulfide bridges follow: C235–C246, C262–C354, and C333–C346. The C-type lectin domain maps to 242 to 355 (HKENCYLFHG…CILTAFSICQ (114 aa)).

As to quaternary structure, homodimer; disulfide-linked. May form a hexamer composed of 3 homodimers. Interacts with HSP70. In terms of processing, N-glycosylated. Predominantly expressed in lung and at lower level in kidney. Expressed in macrophages but not in vascular smooth muscle cells.

The protein resides in the cell membrane. It localises to the membrane raft. It is found in the secreted. Its function is as follows. Receptor that mediates the recognition, internalization and degradation of oxidatively modified low density lipoprotein (oxLDL) by vascular endothelial cells. OxLDL is a marker of atherosclerosis that induces vascular endothelial cell activation and dysfunction, resulting in pro-inflammatory responses, pro-oxidative conditions and apoptosis. Its association with oxLDL induces the activation of NF-kappa-B through an increased production of intracellular reactive oxygen and a variety of pro-atherogenic cellular responses including a reduction of nitric oxide (NO) release, monocyte adhesion and apoptosis. In addition to binding oxLDL, it acts as a receptor for the HSP70 protein involved in antigen cross-presentation to naive T-cells in dendritic cells, thereby participating in cell-mediated antigen cross-presentation. Also involved in inflammatory process, by acting as a leukocyte-adhesion molecule at the vascular interface in endotoxin-induced inflammation. Also acts as a receptor for advanced glycation end (AGE) products, activated platelets, monocytes, apoptotic cells and both Gram-negative and Gram-positive bacteria. This chain is Oxidized low-density lipoprotein receptor 1 (Olr1), found in Rattus norvegicus (Rat).